The chain runs to 435 residues: 5-methylthioadenosine/S-adenosylhomocysteine deaminase (435 aa).

Residues histidine 65 and histidine 67 each coordinate Zn(2+). Substrate contacts are provided by glutamate 94, arginine 150, and histidine 189. Residue histidine 216 coordinates Zn(2+). Substrate is bound by residues glutamate 219 and aspartate 304. A Zn(2+)-binding site is contributed by aspartate 304.

The protein belongs to the metallo-dependent hydrolases superfamily. MTA/SAH deaminase family. The cofactor is Zn(2+).

The catalysed reaction is S-adenosyl-L-homocysteine + H2O + H(+) = S-inosyl-L-homocysteine + NH4(+). It carries out the reaction S-methyl-5'-thioadenosine + H2O + H(+) = S-methyl-5'-thioinosine + NH4(+). In terms of biological role, catalyzes the deamination of 5-methylthioadenosine and S-adenosyl-L-homocysteine into 5-methylthioinosine and S-inosyl-L-homocysteine, respectively. Is also able to deaminate adenosine. This chain is 5-methylthioadenosine/S-adenosylhomocysteine deaminase, found in Bacillus thuringiensis (strain Al Hakam).